The sequence spans 240 residues: UDP-2,3-diacylglucosamine hydrolase (240 aa).

Mn(2+)-binding residues include D8, H10, D41, N79, and H114. 79–80 contributes to the substrate binding site; the sequence is NR. Substrate contacts are provided by D122, S160, N164, K167, and H195. H195 and H197 together coordinate Mn(2+).

The protein belongs to the LpxH family. Mn(2+) serves as cofactor.

The protein localises to the cell inner membrane. It carries out the reaction UDP-2-N,3-O-bis[(3R)-3-hydroxytetradecanoyl]-alpha-D-glucosamine + H2O = 2-N,3-O-bis[(3R)-3-hydroxytetradecanoyl]-alpha-D-glucosaminyl 1-phosphate + UMP + 2 H(+). Its pathway is glycolipid biosynthesis; lipid IV(A) biosynthesis; lipid IV(A) from (3R)-3-hydroxytetradecanoyl-[acyl-carrier-protein] and UDP-N-acetyl-alpha-D-glucosamine: step 4/6. Hydrolyzes the pyrophosphate bond of UDP-2,3-diacylglucosamine to yield 2,3-diacylglucosamine 1-phosphate (lipid X) and UMP by catalyzing the attack of water at the alpha-P atom. Involved in the biosynthesis of lipid A, a phosphorylated glycolipid that anchors the lipopolysaccharide to the outer membrane of the cell. The sequence is that of UDP-2,3-diacylglucosamine hydrolase from Salmonella paratyphi C (strain RKS4594).